The following is a 151-amino-acid chain: Chaperonin GroEL (151 aa).

Residue 41–45 (DGTTT) participates in ATP binding.

Belongs to the chaperonin (HSP60) family. In terms of assembly, forms a cylinder of 14 subunits composed of two heptameric rings stacked back-to-back. Interacts with the co-chaperonin GroES.

The protein resides in the cytoplasm. The catalysed reaction is ATP + H2O + a folded polypeptide = ADP + phosphate + an unfolded polypeptide.. Its function is as follows. Together with its co-chaperonin GroES, plays an essential role in assisting protein folding. The GroEL-GroES system forms a nano-cage that allows encapsulation of the non-native substrate proteins and provides a physical environment optimized to promote and accelerate protein folding. This Mycobacteroides chelonae (Mycobacterium chelonae) protein is Chaperonin GroEL.